The chain runs to 453 residues: Bifunctional protein GlmU (453 aa).

The interval 1 to 226 (MLDILILAAG…IQEVEGINNR (226 aa)) is pyrophosphorylase. Residues 7-10 (LAAG), K21, Q72, 77-78 (GT), 99-101 (YGD), G136, E151, N166, and N224 each bind UDP-N-acetyl-alpha-D-glucosamine. A Mg(2+)-binding site is contributed by D101. N224 lines the Mg(2+) pocket. The tract at residues 227–247 (QQQATLERYYQQQQARALMDA) is linker. Positions 248 to 453 (GVTLLDPARF…QGWERPTRKS (206 aa)) are N-acetyltransferase. 2 residues coordinate UDP-N-acetyl-alpha-D-glucosamine: R330 and K348. The active-site Proton acceptor is H360. Y363 and N374 together coordinate UDP-N-acetyl-alpha-D-glucosamine. Acetyl-CoA is bound by residues A377, 383 to 384 (NY), S402, A420, and R437.

The protein in the N-terminal section; belongs to the N-acetylglucosamine-1-phosphate uridyltransferase family. This sequence in the C-terminal section; belongs to the transferase hexapeptide repeat family. As to quaternary structure, homotrimer. Requires Mg(2+) as cofactor.

The protein resides in the cytoplasm. It carries out the reaction alpha-D-glucosamine 1-phosphate + acetyl-CoA = N-acetyl-alpha-D-glucosamine 1-phosphate + CoA + H(+). It catalyses the reaction N-acetyl-alpha-D-glucosamine 1-phosphate + UTP + H(+) = UDP-N-acetyl-alpha-D-glucosamine + diphosphate. It functions in the pathway nucleotide-sugar biosynthesis; UDP-N-acetyl-alpha-D-glucosamine biosynthesis; N-acetyl-alpha-D-glucosamine 1-phosphate from alpha-D-glucosamine 6-phosphate (route II): step 2/2. The protein operates within nucleotide-sugar biosynthesis; UDP-N-acetyl-alpha-D-glucosamine biosynthesis; UDP-N-acetyl-alpha-D-glucosamine from N-acetyl-alpha-D-glucosamine 1-phosphate: step 1/1. Its pathway is bacterial outer membrane biogenesis; LPS lipid A biosynthesis. In terms of biological role, catalyzes the last two sequential reactions in the de novo biosynthetic pathway for UDP-N-acetylglucosamine (UDP-GlcNAc). The C-terminal domain catalyzes the transfer of acetyl group from acetyl coenzyme A to glucosamine-1-phosphate (GlcN-1-P) to produce N-acetylglucosamine-1-phosphate (GlcNAc-1-P), which is converted into UDP-GlcNAc by the transfer of uridine 5-monophosphate (from uridine 5-triphosphate), a reaction catalyzed by the N-terminal domain. The polypeptide is Bifunctional protein GlmU (Cellvibrio japonicus (strain Ueda107) (Pseudomonas fluorescens subsp. cellulosa)).